The following is a 167-amino-acid chain: Phosphorelay intermediate protein YPD1 (167 aa).

An HPt domain is found at D24–D129. At H64 the chain carries Phosphohistidine.

This sequence belongs to the YPD1 family. As to quaternary structure, interacts with the response regulatory domains of SLN1 and SSK1. Post-translationally, the phosphorelay mechanism involves the sequential transfer of a phosphate group from 'His-576' (H1) to 'Asp-1144' (D1) of SLN1, then to His-64 (H2) of YPD1 and finally to 'Asp-554' (D2) of SSK1 or 'Asp-427' (D2) of SKN7.

The protein localises to the cytoplasm. Its subcellular location is the nucleus. Functionally, phosphorelay intermediate protein that is part of the branched SLN1-YPD1-SKN7/SSK1 two-component regulatory system, which controls activity of the HOG1 pathway and gene expression in response to changes in the osmolarity of the extracellular environment. Catalyzes the phosphoryl group transfer from the membrane-bound osmosensing histidine kinase SLN1 to two distinct response regulator proteins, SSK1 in the cytoplasm, and transcription factor SKN7 in the nucleus. The protein is Phosphorelay intermediate protein YPD1 (YPD1) of Saccharomyces cerevisiae (strain ATCC 204508 / S288c) (Baker's yeast).